The sequence spans 244 residues: Phosphoadenosine 5'-phosphosulfate reductase (244 aa).

The Nucleophile; cysteine thiosulfonate intermediate role is filled by Cys239.

It belongs to the PAPS reductase family. CysH subfamily.

The protein resides in the cytoplasm. It carries out the reaction [thioredoxin]-disulfide + sulfite + adenosine 3',5'-bisphosphate + 2 H(+) = [thioredoxin]-dithiol + 3'-phosphoadenylyl sulfate. It participates in sulfur metabolism; hydrogen sulfide biosynthesis; sulfite from sulfate: step 3/3. Its function is as follows. Catalyzes the formation of sulfite from phosphoadenosine 5'-phosphosulfate (PAPS) using thioredoxin as an electron donor. This chain is Phosphoadenosine 5'-phosphosulfate reductase, found in Klebsiella pneumoniae (strain 342).